Consider the following 89-residue polypeptide: MSERKAVIKNADMPEDMQQDAVDCATQALEKFNIEKDIAAYIKKEFDKKYNPTWHCIVGRNFGSYVTHETKHFIYFYLGQVAVLLFKSG.

This sequence belongs to the dynein light chain family. In terms of assembly, consists of at least 3 heavy chains (alpha, beta and gamma), 2 intermediate chains and 8 light chains.

The protein localises to the cytoplasm. It localises to the cytoskeleton. It is found in the flagellum axoneme. The sequence is that of Dynein light chain LC6, flagellar outer arm from Heliocidaris crassispina (Sea urchin).